The chain runs to 210 residues: 23.6 kDa heat shock protein, mitochondrial (210 aa).

Residues 1-31 (MASALALKRLLSSSIAPRSRSVLRPAVSSRL) constitute a mitochondrion transit peptide. The 111-residue stretch at 100-210 (MGASGARRGW…RNDVRQIEIN (111 aa)) folds into the sHSP domain. The interval 145–165 (GEGKNEEDGGEEGESGNRRFT) is disordered.

Belongs to the small heat shock protein (HSP20) family. May form oligomeric structures.

Its subcellular location is the mitochondrion. The polypeptide is 23.6 kDa heat shock protein, mitochondrial (HSP23.6) (Arabidopsis thaliana (Mouse-ear cress)).